A 208-amino-acid chain; its full sequence is Ribosomal RNA large subunit methyltransferase E (208 aa).

Positions 62, 64, 82, 98, and 123 each coordinate S-adenosyl-L-methionine. Lys163 (proton acceptor) is an active-site residue.

This sequence belongs to the class I-like SAM-binding methyltransferase superfamily. RNA methyltransferase RlmE family.

The protein localises to the cytoplasm. The enzyme catalyses uridine(2552) in 23S rRNA + S-adenosyl-L-methionine = 2'-O-methyluridine(2552) in 23S rRNA + S-adenosyl-L-homocysteine + H(+). In terms of biological role, specifically methylates the uridine in position 2552 of 23S rRNA at the 2'-O position of the ribose in the fully assembled 50S ribosomal subunit. The chain is Ribosomal RNA large subunit methyltransferase E from Actinobacillus pleuropneumoniae serotype 5b (strain L20).